The primary structure comprises 158 residues: Protein Smg homolog (158 aa).

This sequence belongs to the Smg family.

In Vibrio atlanticus (strain LGP32) (Vibrio splendidus (strain Mel32)), this protein is Protein Smg homolog.